A 347-amino-acid chain; its full sequence is Protein-arginine kinase (347 aa).

Residues 22–247 (LVVSTRIRLA…EQVIQAERHA (226 aa)) form the Phosphagen kinase C-terminal domain. ATP contacts are provided by residues 25–29 (STRIR), His85, Arg118, 169–173 (RASVM), and 200–205 (RGRYGE). The RDXXRA motif of the pArg binding pocket involved in allosteric regulation signature appears at 330-335 (RDRERA).

It belongs to the ATP:guanido phosphotransferase family.

It catalyses the reaction L-arginyl-[protein] + ATP = N(omega)-phospho-L-arginyl-[protein] + ADP + H(+). Its activity is regulated as follows. Appears to be allosterically activated by the binding of pArg-containing polypeptides to the pArg-binding pocket localized in the C-terminal domain of McsB. Functionally, catalyzes the specific phosphorylation of arginine residues in proteins. This is Protein-arginine kinase from Exiguobacterium sp. (strain ATCC BAA-1283 / AT1b).